A 251-amino-acid chain; its full sequence is 5-oxoprolinase subunit A 3 (251 aa).

Belongs to the LamB/PxpA family. Forms a complex composed of PxpA, PxpB and PxpC.

It catalyses the reaction 5-oxo-L-proline + ATP + 2 H2O = L-glutamate + ADP + phosphate + H(+). Its function is as follows. Catalyzes the cleavage of 5-oxoproline to form L-glutamate coupled to the hydrolysis of ATP to ADP and inorganic phosphate. This chain is 5-oxoprolinase subunit A 3, found in Pseudomonas aeruginosa (strain ATCC 15692 / DSM 22644 / CIP 104116 / JCM 14847 / LMG 12228 / 1C / PRS 101 / PAO1).